Consider the following 945-residue polypeptide: Leucine--tRNA ligase (945 aa).

The 'HIGH' region motif lies at 43–53; sequence PYPNGAIHIGH. The 'KMSKS' region signature appears at 638–642; sequence KMSKS. K641 lines the ATP pocket.

Belongs to the class-I aminoacyl-tRNA synthetase family.

It localises to the cytoplasm. It catalyses the reaction tRNA(Leu) + L-leucine + ATP = L-leucyl-tRNA(Leu) + AMP + diphosphate. The polypeptide is Leucine--tRNA ligase (Pyrobaculum aerophilum (strain ATCC 51768 / DSM 7523 / JCM 9630 / CIP 104966 / NBRC 100827 / IM2)).